We begin with the raw amino-acid sequence, 337 residues long: MFIDEVRILVKAGDGGNGCLAFRREKFVPRGGPSGGDGGRGGDVTLVCSEHANTLLQFRFNPEHKAERGRHGEGSQRTGAEGRSIDVAVPVGTVVYDEATGERLYDFTVPGERFVVARGGRGGRGNQHFATPTHQAPTEHEPGRPGEEKRLRLELKLLADVGLVGFPNAGKSTLISRISAAKPKIAAYPFTTLEPNLGVVQMEGFRSFVVADIPGIIEGAHEGHGLGIQFLRHIERTRLLAHLVDVSEESGRDPVQDFEIIMQELARFSDQLVAKPMIVVATKMDVAQDPARVEALRDLAKSRDLPFFEISSATGQGIDALKHAMADRVLAPVPVPE.

The region spanning 1 to 158 is the Obg domain; it reads MFIDEVRILV…KRLRLELKLL (158 aa). 2 stretches are compositionally biased toward basic and acidic residues: residues 61–74 and 137–146; these read NPEHKAERGRHGEG and PTEHEPGRPG. Disordered regions lie at residues 61 to 83 and 119 to 146; these read NPEHKAERGRHGEGSQRTGAEGR and GGRGGRGNQHFATPTHQAPTEHEPGRPG. The 172-residue stretch at 159 to 330 folds into the OBG-type G domain; it reads ADVGLVGFPN…LKHAMADRVL (172 aa). Residues 165–172, 190–194, 212–215, 282–285, and 311–313 contribute to the GTP site; these read GFPNAGKS, FTTLE, DIPG, TKMD, and SSA. 2 residues coordinate Mg(2+): Ser-172 and Thr-192.

It belongs to the TRAFAC class OBG-HflX-like GTPase superfamily. OBG GTPase family. Monomer. Mg(2+) serves as cofactor.

The protein localises to the cytoplasm. Its function is as follows. An essential GTPase which binds GTP, GDP and possibly (p)ppGpp with moderate affinity, with high nucleotide exchange rates and a fairly low GTP hydrolysis rate. Plays a role in control of the cell cycle, stress response, ribosome biogenesis and in those bacteria that undergo differentiation, in morphogenesis control. The protein is GTPase Obg of Solibacter usitatus (strain Ellin6076).